The sequence spans 69 residues: DNA-directed RNA polymerase subunit epsilon (69 aa).

This sequence belongs to the RNA polymerase subunit epsilon family. As to quaternary structure, monomer. RNAP is composed of a core of 2 alpha, a beta and a beta' subunit. The core is associated with a delta subunit, and at least one of epsilon or omega. When a sigma factor is associated with the core the holoenzyme is formed, which can initiate transcription.

It is found in the cytoplasm. Its subcellular location is the nucleoid. The catalysed reaction is RNA(n) + a ribonucleoside 5'-triphosphate = RNA(n+1) + diphosphate. Its function is as follows. A non-essential component of RNA polymerase (RNAP). Has a similar structure to bacteriophage T7 protein Gp2 (AC P03704), which is known to bind to RNAP in the DNA binding-cleft. Unlike Gp2 however, this protein does not inhibit transcription initiation. In vitro reconstitution experiments show this subunit is dispensible. The polypeptide is DNA-directed RNA polymerase subunit epsilon (Bacillus subtilis (strain 168)).